Consider the following 428-residue polypeptide: UPF0597 protein Dde_0807 (428 aa).

The protein belongs to the UPF0597 family.

The chain is UPF0597 protein Dde_0807 from Oleidesulfovibrio alaskensis (strain ATCC BAA-1058 / DSM 17464 / G20) (Desulfovibrio alaskensis).